Here is a 180-residue protein sequence, read N- to C-terminus: Prorelaxin (180 aa).

Positions 1 to 25 (MLRLFLSHLLGVWLLLSLRARKIPA) are cleaved as a signal peptide. Intrachain disulfides connect C33–C167, C45–C180, and C166–C171. A propeptide spans 53-154 (SSQQHREPRQ…RSRLDAHSRI (102 aa)) (connecting peptide).

It belongs to the insulin family. As to quaternary structure, heterodimer of a B chain and an A chain linked by two disulfide bonds. Expressed by the placenta. Exclusively detected in cells located in the lamellar placental labyrinth and absent from other placental and non-placental uterine parts.

The protein resides in the secreted. In terms of biological role, relaxin is an ovarian hormone that acts with estrogen to produce dilatation of the birth canal in many mammals. This Felis catus (Cat) protein is Prorelaxin (RLN).